Here is a 199-residue protein sequence, read N- to C-terminus: Large ribosomal subunit protein bL17 (199 aa).

Positions 123 to 199 are disordered; that stretch reads DEANRARRAA…EESEAKDDTK (77 aa). Residues 137 to 152 show a composition bias toward basic and acidic residues; the sequence is KADERADEKADEKAEE. A compositionally biased stretch (acidic residues) spans 153-199; sequence TVEETTEAPAEESTEAAAEETVEETTEAPAEESTEAAEESEAKDDTK.

Belongs to the bacterial ribosomal protein bL17 family. Part of the 50S ribosomal subunit. Contacts protein L32.

This chain is Large ribosomal subunit protein bL17, found in Mycolicibacterium smegmatis (strain ATCC 700084 / mc(2)155) (Mycobacterium smegmatis).